Reading from the N-terminus, the 533-residue chain is NEDD8-activating enzyme E1 regulatory subunit (533 aa).

An interaction with uba3 region spans residues 330-343; that stretch reads DMIADSDKFIKLQN.

This sequence belongs to the ubiquitin-activating E1 family. ULA1 subfamily. In terms of assembly, heterodimer of uba3 and nae1. The complex binds nedd8 and ube2m.

The protein operates within protein modification; protein neddylation. Its function is as follows. Regulatory subunit of the dimeric uba3-nae1 E1 enzyme. E1 activates nedd8 by first adenylating its C-terminal glycine residue with ATP, thereafter linking this residue to the side chain of the catalytic cysteine, yielding a nedd8-uba3 thioester and free AMP. E1 finally transfers nedd8 to the catalytic cysteine of ube2m. The covalent attachment of nedd8 to target proteins is known as 'neddylation' and the process is involved in the regulation of cell growth, viability and development. This chain is NEDD8-activating enzyme E1 regulatory subunit (nae1), found in Danio rerio (Zebrafish).